Reading from the N-terminus, the 244-residue chain is ATP synthase subunit a (244 aa).

Transmembrane regions (helical) follow at residues 17 to 37 (LSNV…AVLT), 74 to 94 (PFLA…MLGL), 112 to 132 (DPAI…YYGV), 148 to 168 (IPLL…TLGL), 171 to 191 (YGNI…ATNF), 196 to 216 (IALG…WQAF), and 217 to 237 (SLFV…VYIS).

Belongs to the ATPase A chain family. F-type ATPases have 2 components, CF(1) - the catalytic core - and CF(0) - the membrane proton channel. CF(1) has five subunits: alpha(3), beta(3), gamma(1), delta(1), epsilon(1). CF(0) has three main subunits: a(1), b(2) and c(9-12). The alpha and beta chains form an alternating ring which encloses part of the gamma chain. CF(1) is attached to CF(0) by a central stalk formed by the gamma and epsilon chains, while a peripheral stalk is formed by the delta and b chains.

It localises to the cell membrane. Its function is as follows. Key component of the proton channel; it plays a direct role in the translocation of protons across the membrane. This Bacillus pumilus (strain SAFR-032) protein is ATP synthase subunit a.